The chain runs to 119 residues: Hydrogenase maturation factor HypA (119 aa).

Residue histidine 2 coordinates Ni(2+). Residues cysteine 73, cysteine 76, cysteine 89, and cysteine 92 each contribute to the Zn(2+) site.

The protein belongs to the HypA/HybF family.

Functionally, involved in the maturation of [NiFe] hydrogenases. Required for nickel insertion into the metal center of the hydrogenase. The sequence is that of Hydrogenase maturation factor HypA from Cupriavidus necator (strain ATCC 17699 / DSM 428 / KCTC 22496 / NCIMB 10442 / H16 / Stanier 337) (Ralstonia eutropha).